Reading from the N-terminus, the 238-residue chain is Large ribosomal subunit protein uL1 (238 aa).

This sequence belongs to the universal ribosomal protein uL1 family. As to quaternary structure, part of the 50S ribosomal subunit.

Its function is as follows. Binds directly to 23S rRNA. The L1 stalk is quite mobile in the ribosome, and is involved in E site tRNA release. Protein L1 is also a translational repressor protein, it controls the translation of the L11 operon by binding to its mRNA. This is Large ribosomal subunit protein uL1 from Salinispora tropica (strain ATCC BAA-916 / DSM 44818 / JCM 13857 / NBRC 105044 / CNB-440).